We begin with the raw amino-acid sequence, 601 residues long: NADH-ubiquinone oxidoreductase chain 5 (601 aa).

The next 15 membrane-spanning stretches (helical) occupy residues 3–23 (LIMP…MMSY), 36–56 (VTSS…MFLL), 84–104 (FFSI…MEFS), 114–134 (INQF…LVTA), 140–160 (LFIG…WWYG), 171–191 (AILY…WLLL), 201–221 (IFML…AAAG), 240–260 (TPVS…FLLV), 272–292 (ILTM…ICAL), 324–346 (AFLH…GSII), 365–385 (MPFT…MPFL), 404–426 (NAWA…TRLI), 456–476 (LALG…PLIT), 483–503 (LYMK…AMGL), and 581–601 (LIKL…MLII).

The protein belongs to the complex I subunit 5 family.

The protein resides in the mitochondrion inner membrane. It catalyses the reaction a ubiquinone + NADH + 5 H(+)(in) = a ubiquinol + NAD(+) + 4 H(+)(out). Core subunit of the mitochondrial membrane respiratory chain NADH dehydrogenase (Complex I) that is believed to belong to the minimal assembly required for catalysis. Complex I functions in the transfer of electrons from NADH to the respiratory chain. The immediate electron acceptor for the enzyme is believed to be ubiquinone. The polypeptide is NADH-ubiquinone oxidoreductase chain 5 (MT-ND5) (Dasypus novemcinctus (Nine-banded armadillo)).